The chain runs to 369 residues: Cobalamin-binding protein (369 aa).

A signal peptide spans methionine 1–alanine 24. In terms of domain architecture, Fe/B12 periplasmic-binding spans arginine 62 to threonine 319. Residues threonine 322–alanine 343 form a disordered region. Over residues proline 328–alanine 343 the composition is skewed to low complexity.

The complex is composed of two ATP-binding proteins (BtuD), two transmembrane proteins (BtuC) and a solute-binding protein (BtuF).

In terms of biological role, required for corrinoid utilization. Probably part of the ABC transporter complex BtuCDF involved in cobalamin (vitamin B12) import. Probably binds cobalamin and delivers it to the surface of BtuC. This Halobacterium salinarum (strain ATCC 29341 / DSM 671 / R1) protein is Cobalamin-binding protein (btuF).